The primary structure comprises 80 residues: Acyl carrier protein (80 aa).

One can recognise a Carrier domain in the interval 1-79; it reads MTEEEIFNKI…EAVEYIKSHQ (79 aa). Residue Ser-39 is modified to O-(pantetheine 4'-phosphoryl)serine.

Belongs to the acyl carrier protein (ACP) family. Post-translationally, 4'-phosphopantetheine is transferred from CoA to a specific serine of apo-ACP by AcpS. This modification is essential for activity because fatty acids are bound in thioester linkage to the sulfhydryl of the prosthetic group.

It is found in the cytoplasm. It functions in the pathway lipid metabolism; fatty acid biosynthesis. Functionally, carrier of the growing fatty acid chain in fatty acid biosynthesis. In Lactobacillus johnsonii (strain CNCM I-12250 / La1 / NCC 533), this protein is Acyl carrier protein.